A 98-amino-acid polypeptide reads, in one-letter code: NADH-ubiquinone oxidoreductase chain 4L (98 aa).

The next 3 helical transmembrane spans lie at 1–21 (MSLI…GLLM), 29–49 (ALLC…LTIL), and 61–81 (IILL…LVMI).

The protein belongs to the complex I subunit 4L family. Core subunit of respiratory chain NADH dehydrogenase (Complex I) which is composed of 45 different subunits.

Its subcellular location is the mitochondrion inner membrane. It catalyses the reaction a ubiquinone + NADH + 5 H(+)(in) = a ubiquinol + NAD(+) + 4 H(+)(out). In terms of biological role, core subunit of the mitochondrial membrane respiratory chain NADH dehydrogenase (Complex I) which catalyzes electron transfer from NADH through the respiratory chain, using ubiquinone as an electron acceptor. Part of the enzyme membrane arm which is embedded in the lipid bilayer and involved in proton translocation. In Berardius bairdii (Baird's beaked whale), this protein is NADH-ubiquinone oxidoreductase chain 4L (MT-ND4L).